The sequence spans 323 residues: Glyoxylate/hydroxypyruvate reductase B (323 aa).

Residues R237 and E266 contribute to the active site. Residue H285 is the Proton donor of the active site.

It belongs to the D-isomer specific 2-hydroxyacid dehydrogenase family. GhrB subfamily. Homodimer.

It localises to the cytoplasm. The catalysed reaction is glycolate + NADP(+) = glyoxylate + NADPH + H(+). It catalyses the reaction (R)-glycerate + NAD(+) = 3-hydroxypyruvate + NADH + H(+). It carries out the reaction (R)-glycerate + NADP(+) = 3-hydroxypyruvate + NADPH + H(+). Functionally, catalyzes the NADPH-dependent reduction of glyoxylate and hydroxypyruvate into glycolate and glycerate, respectively. This chain is Glyoxylate/hydroxypyruvate reductase B, found in Klebsiella pneumoniae (strain 342).